A 257-amino-acid polypeptide reads, in one-letter code: MADS-box transcription factor 1 (257 aa).

Positions 1 to 61 (MGRGKVELKR…GRLFEFSSSS (61 aa)) constitute an MADS-box domain. In terms of domain architecture, K-box spans 85-175 (NEINYQEYLK…RKKLQETSAE (91 aa)).

May interact with the K-box of MADS6, MADS14 and MADS15.

The protein localises to the nucleus. Functionally, probable transcription factor involved in the development of floral organs. Required for the formation of inner floral organs (lodicules, stamens and carpels, or whorls 2, 3 and 4) and the lemma and palea (whorl 1), which are grass floral organs analogous to sepals. May be involved in the control of flowering time. Seems to act as transcriptional activator. May act upstream of the auxin-responsive protein GH3.8. This chain is MADS-box transcription factor 1 (MADS1), found in Oryza sativa subsp. indica (Rice).